Here is a 260-residue protein sequence, read N- to C-terminus: Putative sgc region transcriptional regulator (260 aa).

The HTH deoR-type domain maps to 5–61 (RPDRIKQMLHYLWQHRHLSTQQAMELFGYAEATVRRDFQYIVNQYPGMIRGHGCLDF). The H-T-H motif DNA-binding region spans 22-41 (LSTQQAMELFGYAEATVRRD).

Putative transcriptional regulator for the sgcREAQCX region. The protein is Putative sgc region transcriptional regulator (sgcR) of Escherichia coli (strain K12).